Here is a 314-residue protein sequence, read N- to C-terminus: Protein YIF1B (314 aa).

The residue at position 1 (Met-1) is an N-acetylmethionine. Over residues 1–12 (MHPAGLAAAAAG) the composition is skewed to low complexity. The segment at 1–55 (MHPAGLAAAAAGTPRLRKWPSKRRIPVSQPGMADPHQLFDDTSSAQSRGYGAQRA) is disordered. The Cytoplasmic portion of the chain corresponds to 1-156 (MHPAGLAAAA…APRFDVNAPD (156 aa)). Thr-13 carries the phosphothreonine modification. A compositionally biased stretch (basic residues) spans 15-25 (RLRKWPSKRRI). Ser-65 carries the phosphoserine modification. A helical membrane pass occupies residues 157-177 (LYIPAMAFITYVLVAGLALGT). Topologically, residues 178-192 (QDRFSPDLLGLQASS) are extracellular. Residues 193-213 (ALAWLTLEVLAILLSLYLVTV) form a helical membrane-spanning segment. Residues 214 to 219 (NTDLTT) are Cytoplasmic-facing. A helical transmembrane segment spans residues 220–240 (IDLVAFLGYKYVGMIGGVLMG). Leu-241 is a topological domain (extracellular). The chain crosses the membrane as a helical span at residues 242–262 (LFGKIGYYLVLGWCCVAIFVF). Over 263 to 292 (MIRTLRLKILADAAAEGVPVRGARNQLRMY) the chain is Cytoplasmic. Residues 293–313 (LTMAVAAAQPMLMYWLTFHLV) traverse the membrane as a helical segment. A topological domain (extracellular) is located at residue Arg-314.

This sequence belongs to the YIF1 family. In terms of assembly, interacts with HTR1A (via C-terminus). Interacts with ABCB9 (via TMD0); this interaction allows (but is not essential) the ER-to-Golgi trafficking and strongly depends on a salt bridge within TMD0.

The protein resides in the endoplasmic reticulum membrane. It is found in the golgi apparatus membrane. Its subcellular location is the endoplasmic reticulum-Golgi intermediate compartment membrane. Functions in endoplasmic reticulum to Golgi vesicle-mediated transport and regulates the proper organization of the endoplasmic reticulum and the Golgi. Plays a key role in targeting to neuronal dendrites receptors such as HTR1A. Plays also a role in primary cilium and sperm flagellum assembly probably through protein transport to these compartments. In Homo sapiens (Human), this protein is Protein YIF1B.